Consider the following 186-residue polypeptide: Interferon lambda-3 (186 aa).

The N-terminal stretch at 1 to 21 is a signal peptide; sequence MVCYGVTIILVGTLGSLLVGA. 3 cysteine pairs are disulfide-bonded: cysteine 31-cysteine 128, cysteine 65-cysteine 160, and cysteine 178-cysteine 185.

It belongs to the lambda interferon family.

Its subcellular location is the secreted. Its function is as follows. Cytokine which plays a critical role in the antiviral host defense, predominantly in the epithelial tissues. Acts as a ligand for the heterodimeric class II cytokine receptor composed of IL10RB and IFNLR1, and receptor engagement leads to the activation of the JAK/STAT signaling pathway resulting in the expression of IFN-stimulated genes (ISG), which mediate the antiviral state. Has a restricted receptor distribution and therefore restricted targets: is primarily active in epithelial cells and this cell type-selective action is because of the epithelial cell-specific expression of its receptor IFNLR1. Exhibits antiviral activity against the H5N1 influenza A virus. Induces the expression of the antiviral MX protein in epithelial-rich tissues, such as intestine, trachea and lung. This is Interferon lambda-3 (IFNL3) from Gallus gallus (Chicken).